The primary structure comprises 426 residues: Cuticle-degrading serine protease (426 aa).

The N-terminal stretch at 1–21 is a signal peptide; it reads MLTNGLISLLAIAGLATNAFA. A propeptide spanning residues 22 to 123 is cleaved from the precursor; that stretch reads GPIRKVSNAG…VEQDTVVTTY (102 aa). An Inhibitor I9 domain is found at 39-122; sequence KYIVVLKKGL…YVEQDTVVTT (84 aa). Residues 130–426 form the Peptidase S8 domain; sequence TWGLDRISHE…TNHQVTIVAS (297 aa). Residue Asp-164 is the Charge relay system of the active site. Asn-178 carries N-linked (GlcNAc...) asparagine glycosylation. His-200 (charge relay system) is an active-site residue. N-linked (GlcNAc...) asparagine glycosylation is present at Asn-252. Ser-353 (charge relay system) is an active-site residue.

This sequence belongs to the peptidase S8 family.

The protein resides in the secreted. Inhibited by PMSF, SSI, the peptide Phe-Val and by Phe, but not by EDTA. Functionally, hydrolyzes gelatin, casein, the chromogenic substrate azocoll and the cuticle of the nematode P.redivivus. Immobilizes P.redivivus. This is Cuticle-degrading serine protease from Orbilia oligospora (Nematode-trapping fungus).